The sequence spans 396 residues: Ribosomal RNA large subunit methyltransferase I (396 aa).

One can recognise a PUA domain in the interval 2 to 81 (SVRLVLAKGR…ESIDIAFFSR (80 aa)).

The protein belongs to the methyltransferase superfamily. RlmI family.

It is found in the cytoplasm. The catalysed reaction is cytidine(1962) in 23S rRNA + S-adenosyl-L-methionine = 5-methylcytidine(1962) in 23S rRNA + S-adenosyl-L-homocysteine + H(+). Its function is as follows. Specifically methylates the cytosine at position 1962 (m5C1962) of 23S rRNA. This Escherichia coli (strain K12 / MC4100 / BW2952) protein is Ribosomal RNA large subunit methyltransferase I.